The primary structure comprises 78 residues: uncharacterized protein (78 aa).

The tract at residues 1–28 (MQANHSVSYLYESSTSKRSNGLFSQTQK) is disordered.

This is an uncharacterized protein from Saccharomyces cerevisiae (strain ATCC 204508 / S288c) (Baker's yeast).